The sequence spans 232 residues: Ribonuclease P protein component 3 (232 aa).

It belongs to the eukaryotic/archaeal RNase P protein component 3 family. Consists of a catalytic RNA component and at least 4-5 protein subunits.

Its subcellular location is the cytoplasm. It carries out the reaction Endonucleolytic cleavage of RNA, removing 5'-extranucleotides from tRNA precursor.. Its function is as follows. Part of ribonuclease P, a protein complex that generates mature tRNA molecules by cleaving their 5'-ends. This is Ribonuclease P protein component 3 from Methanococcus maripaludis (strain C7 / ATCC BAA-1331).